The following is a 136-amino-acid chain: uncharacterized protein (136 aa).

Residues 1 to 19 (MMTAAKRLGLYSALRACSA) form the signal peptide. A helical membrane pass occupies residues 75–97 (FWFSHTCLVFGSNTILFASLNSF).

The protein localises to the membrane. This is an uncharacterized protein from Saccharomyces cerevisiae (strain ATCC 204508 / S288c) (Baker's yeast).